The chain runs to 237 residues: DNA repair protein RecO (237 aa).

It belongs to the RecO family.

Involved in DNA repair and RecF pathway recombination. The chain is DNA repair protein RecO from Rickettsia felis (strain ATCC VR-1525 / URRWXCal2) (Rickettsia azadi).